A 351-amino-acid polypeptide reads, in one-letter code: DNA-directed RNA polymerase subunit alpha (351 aa).

The tract at residues 1–236 is alpha N-terminal domain (alpha-NTD); sequence MSVNTKNWQE…DQLTLFVHFE (236 aa). The alpha C-terminal domain (alpha-CTD) stretch occupies residues 256-351; that stretch reads DDANQLNRYL…AKKLEQELLG (96 aa).

Belongs to the RNA polymerase alpha chain family. Homodimer. The RNAP catalytic core consists of 2 alpha, 1 beta, 1 beta' and 1 omega subunit. When a sigma factor is associated with the core the holoenzyme is formed, which can initiate transcription.

The catalysed reaction is RNA(n) + a ribonucleoside 5'-triphosphate = RNA(n+1) + diphosphate. In terms of biological role, DNA-dependent RNA polymerase catalyzes the transcription of DNA into RNA using the four ribonucleoside triphosphates as substrates. The sequence is that of DNA-directed RNA polymerase subunit alpha from Erythrobacter litoralis (strain HTCC2594).